The chain runs to 1294 residues: Unconventional myosin-VI (1294 aa).

A Myosin N-terminal SH3-like domain is found at 2 to 53; the sequence is EDGKPVWAPHPTDGFQMGNIVDIGPDSLTIEPLNQKGKTFLALINQVFPAEE. Positions 57–771 constitute a Myosin motor domain; the sequence is KDVEDNCSLM…KFAEFDQIMK (715 aa). 151–158 is an ATP binding site; that stretch reads GESGAGKT. Ser267 carries the phosphoserine modification. A responsible for slow ATPase activity region spans residues 273-317; that stretch reads YLNRGCTRYFANKETDKQILQNRKSPEYLKAGSMKDPLLDDHGDF. The residue at position 405 (Thr405) is a Phosphothreonine. A Phosphoserine modification is found at Ser604. Positions 665 to 672 are actin-binding; that stretch reads FIRCIKPN. The interval 782 to 810 is required for binding calmodulin; it reads KRVNHWLTCSRWKKVQWCSLSVIKLKNKI. An IQ domain is found at 814 to 834; sequence AEACIKMQKTIRMWLCKRRHK. The three-helix bundle stretch occupies residues 835 to 916; the sequence is PRIDGLVKVG…EELLSALQKK (82 aa). An SAH region spans residues 917–984; it reads KQQEEEAERL…EDDEKRIQAE (68 aa). The interval 934 to 955 is disordered; it reads EKERKRREEDEKRRRKEEEERR. At Ser1025 the chain carries Phosphoserine. Residues 1060-1285 are interaction with TAX1BP1 and CALCOCO2/NDP52; the sequence is KEMSEFLSRG…ESRQARPTYA (226 aa). Residues 1116 to 1118 are interaction with OPTN; that stretch reads RRL. A Phosphoserine modification is found at Ser1155. The interval 1157–1285 is interaction with TOM1; the sequence is QQNPAAQIPA…ESRQARPTYA (129 aa).

It belongs to the TRAFAC class myosin-kinesin ATPase superfamily. Myosin family. In terms of assembly, homodimer; dimerization seems to implicate the unfolding of the three-helix bundle region creating an additional calmodulin binding site, and cargo binding. Able to function as a monomer under specific conditions in vitro. Forms a complex with CFTR and DAB2 in the apical membrane of epithelial cells. Component of the DISP/DOCK7-induced septin displacement complex, at least composed of DOCK7, LRCH3 and MYO6. Binding to calmodulin through a unique insert, not found in other myosins, located in the neck region between the motor domain and the IQ domain appears to contribute to the directionality reversal. This interaction occurs only if the C-terminal lobe of calmodulin is occupied by calcium. Interaction with F-actin/ACTN1 occurs only at the apical brush border domain of the proximal tubule cells. Interacts with DAB2. In vitro, the C-terminal globular tail binds a C-terminal region of DAB2. Interacts with CFTR. Interacts with CABP5. Interacts with TOM1. Interacts with OPTN. Interacts with TAX1BP1 and CALCOCO2/NDP52. Interacts with TOM1L2. Interacts with CLIC5; may work together in a complex which also includes RDX and MYO6 to stabilize linkages between the plasma membrane and subjacent actin cytoskeleton at the base of stereocilia. In terms of processing, phosphorylation in the motor domain, induced by EGF, results in translocation of MYO6 from the cell surface to membrane ruffles and affects F-actin dynamics. Phosphorylated in vitro by p21-activated kinase (PAK). As to expression, expressed in most tissues examined including heart, brain, placenta, pancreas, spleen, thymus, prostate, testis, ovary, small intestine and colon. Highest levels in brain, pancreas, testis and small intestine. Also expressed in fetal brain and cochlea. Isoform 1 and isoform 2, containing the small insert, and isoform 4, containing neither insert, are expressed in unpolarized epithelial cells.

It is found in the golgi apparatus. Its subcellular location is the trans-Golgi network membrane. The protein localises to the nucleus. The protein resides in the cytoplasm. It localises to the perinuclear region. It is found in the membrane. Its subcellular location is the clathrin-coated pit. The protein localises to the cytoplasmic vesicle. The protein resides in the clathrin-coated vesicle. It localises to the cell projection. It is found in the filopodium. Its subcellular location is the ruffle membrane. The protein localises to the microvillus. The protein resides in the cytosol. It localises to the autophagosome. It is found in the endosome. Its subcellular location is the clathrin-coated vesicle membrane. Its function is as follows. Myosins are actin-based motor molecules with ATPase activity. Unconventional myosins serve in intracellular movements. Myosin 6 is a reverse-direction motor protein that moves towards the minus-end of actin filaments. Has slow rate of actin-activated ADP release due to weak ATP binding. Functions in a variety of intracellular processes such as vesicular membrane trafficking and cell migration. Required for the structural integrity of the Golgi apparatus via the p53-dependent pro-survival pathway. Appears to be involved in a very early step of clathrin-mediated endocytosis in polarized epithelial cells. Together with TOM1, mediates delivery of endocytic cargo to autophagosomes thereby promoting autophagosome maturation and driving fusion with lysosomes. Links TOM1 with autophagy receptors, such as TAX1BP1; CALCOCO2/NDP52 and OPTN. May act as a regulator of F-actin dynamics. As part of the DISP complex, may regulate the association of septins with actin and thereby regulate the actin cytoskeleton. May play a role in transporting DAB2 from the plasma membrane to specific cellular targets. May play a role in the extension and network organization of neurites. Required for structural integrity of inner ear hair cells. Required for the correct localization of CLIC5 and RDX at the stereocilium base. Modulates RNA polymerase II-dependent transcription. In Homo sapiens (Human), this protein is Unconventional myosin-VI.